A 172-amino-acid polypeptide reads, in one-letter code: Trypsin inhibitor DE-3 (172 aa).

2 disulfide bridges follow: cysteine 39-cysteine 83 and cysteine 132-cysteine 139.

Belongs to the protease inhibitor I3 (leguminous Kunitz-type inhibitor) family.

In terms of biological role, inhibition of trypsin. The sequence is that of Trypsin inhibitor DE-3 from Erythrina latissima (Broad-leaved coral tree).